Consider the following 49-residue polypeptide: uncharacterized protein (49 aa).

Residues 8 to 28 traverse the membrane as a helical segment; that stretch reads FFLFSSGVLQATTLLLVILIF.

The protein resides in the cell membrane. This is an uncharacterized protein from Bacillus subtilis (strain 168).